The chain runs to 180 residues: UPF0303 protein PSEEN3311 (180 aa).

Belongs to the UPF0303 family.

This is UPF0303 protein PSEEN3311 from Pseudomonas entomophila (strain L48).